We begin with the raw amino-acid sequence, 332 residues long: MAVIYYDKDCDLSLIEKKLIGIVGYGAQGHAHAQNLRDSGLKVIVACVEGGRGWKKATADGFEVMCVAEMAKKADIIMMLAPDTSQAKIYKDSVEQGLKPGKMLMFAHGFNIHYGQIVPPSFVDVTMIAPKCPGYMLRQVFTEGAGAPSLIAVEQDASGKAKELALAYAKGIGSNRAGILETTFAEETETDLFGEQAVLCGGTTSLVKAGFETLVEAGYQPEVAYFECLHELKLIVDLMYQGGIAYMRDSISDTAKYGDFTRGPRVINEDTYETMGEILGEIQDGSFAKEWILENQAGRPVYNSLRRMESEHLIEEVGAELRSMMSWLKKKK.

One can recognise a KARI N-terminal Rossmann domain in the interval 1–182; it reads MAVIYYDKDC…GSNRAGILET (182 aa). NADP(+)-binding positions include 25 to 28 and 83 to 86; these read YGAQ and DTSQ. Histidine 108 is an active-site residue. Glycine 134 contributes to the NADP(+) binding site. The KARI C-terminal knotted domain maps to 183-328; that stretch reads TFAEETETDL…AELRSMMSWL (146 aa). Residues aspartate 191, glutamate 195, glutamate 227, and glutamate 231 each coordinate Mg(2+). Residue serine 252 coordinates substrate.

It belongs to the ketol-acid reductoisomerase family. Mg(2+) serves as cofactor.

The enzyme catalyses (2R)-2,3-dihydroxy-3-methylbutanoate + NADP(+) = (2S)-2-acetolactate + NADPH + H(+). It catalyses the reaction (2R,3R)-2,3-dihydroxy-3-methylpentanoate + NADP(+) = (S)-2-ethyl-2-hydroxy-3-oxobutanoate + NADPH + H(+). Its pathway is amino-acid biosynthesis; L-isoleucine biosynthesis; L-isoleucine from 2-oxobutanoate: step 2/4. It participates in amino-acid biosynthesis; L-valine biosynthesis; L-valine from pyruvate: step 2/4. Its function is as follows. Involved in the biosynthesis of branched-chain amino acids (BCAA). Catalyzes an alkyl-migration followed by a ketol-acid reduction of (S)-2-acetolactate (S2AL) to yield (R)-2,3-dihydroxy-isovalerate. In the isomerase reaction, S2AL is rearranged via a Mg-dependent methyl migration to produce 3-hydroxy-3-methyl-2-ketobutyrate (HMKB). In the reductase reaction, this 2-ketoacid undergoes a metal-dependent reduction by NADPH to yield (R)-2,3-dihydroxy-isovalerate. The polypeptide is Ketol-acid reductoisomerase (NADP(+)) (Dehalococcoides mccartyi (strain ATCC BAA-2100 / JCM 16839 / KCTC 5957 / BAV1)).